Here is a 507-residue protein sequence, read N- to C-terminus: Anaerobic nitric oxide reductase transcription regulator NorR (507 aa).

At aspartate 57 the chain carries 4-aspartylphosphate. Residues 188-417 (IIGLSSVMQQ…LEHSIYRAAI (230 aa)) enclose the Sigma-54 factor interaction domain. ATP is bound by residues 216-223 (GETGVGKE) and 279-288 (ADNGTLFLDE). The segment at residues 483 to 502 (WAATARKLELDSGNLHRLAK) is a DNA-binding region (H-T-H motif).

It participates in nitrogen metabolism; nitric oxide reduction. Required for the expression of anaerobic nitric oxide (NO) reductase, acts as a transcriptional activator for at least the norVW operon. Activation also requires sigma-54. This Serratia proteamaculans (strain 568) protein is Anaerobic nitric oxide reductase transcription regulator NorR.